Consider the following 326-residue polypeptide: UDP-3-O-acylglucosamine N-acyltransferase (326 aa).

The active-site Proton acceptor is histidine 235.

This sequence belongs to the transferase hexapeptide repeat family. LpxD subfamily. In terms of assembly, homotrimer.

It catalyses the reaction a UDP-3-O-[(3R)-3-hydroxyacyl]-alpha-D-glucosamine + a (3R)-hydroxyacyl-[ACP] = a UDP-2-N,3-O-bis[(3R)-3-hydroxyacyl]-alpha-D-glucosamine + holo-[ACP] + H(+). It functions in the pathway bacterial outer membrane biogenesis; LPS lipid A biosynthesis. Its function is as follows. Catalyzes the N-acylation of UDP-3-O-acylglucosamine using 3-hydroxyacyl-ACP as the acyl donor. Is involved in the biosynthesis of lipid A, a phosphorylated glycolipid that anchors the lipopolysaccharide to the outer membrane of the cell. The protein is UDP-3-O-acylglucosamine N-acyltransferase of Helicobacter hepaticus (strain ATCC 51449 / 3B1).